We begin with the raw amino-acid sequence, 337 residues long: Protein hairy (337 aa).

The segment at 29–48 (KSDRRSNKPIMEKRRRARIN) is interaction with Topors. Positions 31 to 88 (DRRSNKPIMEKRRRARINNCLNELKTLILDATKKDPARHSKLEKADILEKTVKHLQEL) constitute a bHLH domain. The 30-residue stretch at 107–136 (FKAGFADCVNEVSRFPGIEPAQRRRLLQHL) folds into the Orange domain. Disordered stretches follow at residues 146 to 178 (ELHQ…SQQG) and 259 to 311 (MPQR…VIQR). Residues 263-301 (TASTGSASSHSSAGYESAPGSSSSCSYAPPSPANSSYEP) are compositionally biased toward low complexity. Positions 334-337 (WRPW) match the WRPW motif motif.

As to quaternary structure, transcription repression requires formation of a complex with a corepressor protein (Groucho). Interacts with gro (via WPRW motif) and Topors. Post-translationally, ubiquitinated by Topors.

It localises to the nucleus. Its function is as follows. Pair-rule protein that regulates embryonic segmentation and adult bristle patterning. Transcriptional repressor of genes that require a bHLH protein for their transcription (e.g. ftz). The protein is Protein hairy of Drosophila melanogaster (Fruit fly).